A 333-amino-acid chain; its full sequence is Probable ABC transporter permease protein y4mJ (333 aa).

The next 10 membrane-spanning stretches (helical) occupy residues 30–50, 62–82, 84–104, 110–130, 133–153, 175–195, 228–248, 253–273, 274–294, and 300–320; these read LAIA…VPQA, AGAP…TGGI, LSVG…MASG, ALIG…LVTV, LAPF…AFIV, IPGV…IEIF, FAYV…ISYI, STAG…GGAS, LLGG…ITVI, and LIGI…LIAV.

It belongs to the binding-protein-dependent transport system permease family. AraH/RbsC subfamily.

Its subcellular location is the cell inner membrane. Probably part of the binding-protein-dependent transport system y4mIJK. This system probably transports a sugar. Probably responsible for the translocation of the substrate across the membrane. The sequence is that of Probable ABC transporter permease protein y4mJ from Sinorhizobium fredii (strain NBRC 101917 / NGR234).